A 156-amino-acid chain; its full sequence is Fibroblast growth factor 2 (156 aa).

A propeptide spanning residues 1–9 (MAAGSITTL) is cleaved from the precursor. Asparagine 37 is a heparin binding site. Tyrosine 83 is subject to Phosphotyrosine; by TEC. Lysine 96 is covalently cross-linked (Glycyl lysine isopeptide (Lys-Gly) (interchain with G-Cter in SUMO1)). A heparin-binding region spans residues 129–145 (KRTGQYKLGSKTGPGQK).

This sequence belongs to the heparin-binding growth factors family. As to quaternary structure, monomer. Homodimer. Interacts with FGFR1, FGFR2, FGFR3 and FGFR4. Affinity between fibroblast growth factors (FGFs) and their receptors is increased by heparan sulfate glycosaminoglycans that function as coreceptors. Interacts with CSPG4, FGFBP1 and TEC. Found in a complex with FGFBP1, FGF1 and FGF2. Interacts with FGFBP3. Interacts with integrin ITGAV:ITGB3; the interaction is required for FGF2 signaling. Interacts with SNORC (via the extracellular domain). Interacts with glypican GPC3. Phosphorylation at Tyr-83 regulates FGF2 unconventional secretion.

Its subcellular location is the secreted. It localises to the nucleus. Functionally, acts as a ligand for FGFR1, FGFR2, FGFR3 and FGFR4. Also acts as an integrin ligand which is required for FGF2 signaling. Binds to integrin ITGAV:ITGB3. Plays an important role in the regulation of cell survival, cell division, cell differentiation and cell migration. Functions as a potent mitogen in vitro. Can induce angiogenesis. Mediates phosphorylation of ERK1/2 and thereby promotes retinal lens fiber differentiation. The protein is Fibroblast growth factor 2 (FGF2) of Monodelphis domestica (Gray short-tailed opossum).